The primary structure comprises 496 residues: Lysosomal Pro-X carboxypeptidase (496 aa).

Residues 1–21 form the signal peptide; the sequence is MGRRALLLLLLSFLAPWTTIA. The propeptide occupies 22–45; it reads LRPALRALGSLHLPTNPTSLPAVA. Residues N47 and N101 are each glycosylated (N-linked (GlcNAc...) asparagine). S179 acts as the Charge relay system in catalysis. The interval 194–334 is SKS domain; sequence HMVVGALAAS…QNIFQALNVY (141 aa). 4 disulfides stabilise this stretch: C215-C372, C233-C310, C264-C343, and C364-C394. N-linked (GlcNAc...) asparagine glycans are attached at residues N317, N336, and N345. A glycan (N-linked (GlcNAc...) asparagine) is linked at N415. Catalysis depends on charge relay system residues D430 and H455.

The protein belongs to the peptidase S28 family. In terms of assembly, homodimer.

Its subcellular location is the lysosome. The catalysed reaction is Cleavage of a -Pro-|-Xaa bond to release a C-terminal amino acid.. Functionally, cleaves C-terminal amino acids linked to proline in peptides such as angiotensin II, III and des-Arg9-bradykinin. This cleavage occurs at acidic pH, but enzymatic activity is retained with some substrates at neutral pH. The sequence is that of Lysosomal Pro-X carboxypeptidase (PRCP) from Pongo abelii (Sumatran orangutan).